The primary structure comprises 268 residues: Putative hydro-lyase PSPTO_5379 (268 aa).

The protein belongs to the D-glutamate cyclase family.

This chain is Putative hydro-lyase PSPTO_5379, found in Pseudomonas syringae pv. tomato (strain ATCC BAA-871 / DC3000).